Consider the following 175-residue polypeptide: Ribosome maturation factor RimM (175 aa).

Residues 96 to 175 (EGDFYWHDLI…TIEVDWDAGF (80 aa)) form the PRC barrel domain.

This sequence belongs to the RimM family. Binds ribosomal protein uS19.

It is found in the cytoplasm. Functionally, an accessory protein needed during the final step in the assembly of 30S ribosomal subunit, possibly for assembly of the head region. Essential for efficient processing of 16S rRNA. May be needed both before and after RbfA during the maturation of 16S rRNA. It has affinity for free ribosomal 30S subunits but not for 70S ribosomes. This Histophilus somni (strain 129Pt) (Haemophilus somnus) protein is Ribosome maturation factor RimM.